A 1597-amino-acid polypeptide reads, in one-letter code: MEKNERFKMHKVKKRWVTISVASATMLASALGASVASADTETVSEDSNQAVLTADQTTTNQDTEQTSVAATATSEQSASTDAATDQASATDQASAAEQTQGTTASTDTAAQTTTNANEAKWVPTENENQVFTDEMLAEAKNVATAESNSIPSDLAKMSNVKQVDGKYYYYDQDGNVKKNFAVSVGEKIYYFDETGAYKDTSKVEADKSGSDISKEETTFAANNRAYSTSAENFEAIDNYLTADSWYRPKSILKDGKTWTESSKDDFRPLLMAWWPDTETKRNYVNYMNKVVGIDKTYTAETSQADLTAAAELVQARIEQKITTEQNTKWLREAISAFVKTQPQWNGESEKPYDDHLQNGALKFDNQSDLTPDTQSNYRLLNRTPTNQTGSLDSRFTYNANDPLGGYELLLANDVDNSNPIVQAEQLNWLHYLLNFGTIYAKDADANFDSIRVDAVDNVDADLLQISSDYLKAAYGIDKNNKNANNHVSIVEAWSDNDTPYLHDDGDNLMNMDNKFRLSMLWSLAKPLDKRSGLNPLIHNSLVDREVDDREVETVPSYSFARAHDSEVQDLIRDIIKAEINPNAFGYSFTQDEIDQAFKIYNEDLKKTDKKYTHYNVPLSYTLLLTNKGSIPRVYYGDMFTDDGQYMANKTVNYDAIESLLKARMKYVAGGQAMQNYQIGNGEILTSVRYGKGALKQSDKGDATTRTSGVGVVMGNQPNFSLDGKVVALNMGAAHANQEYRALMVSTKDGVATYATDADASKAGLVKRTDENGYLYFLNDDLKGVANPQVSGFLQVWVPVGAADDQDIRVAASDTASTDGKSLHQDAAMDSRVMFEGFSNFQSFATKEEEYTNVVIANNVDKFVSWGITDFEMAPQYVSSTDGQFLDSVIQNGYAFTDRYDLGMSKANKYGTADQLVKAIKALHAKGLKVMADWVPDQMYTFPKQEVVTVTRTDKFGKPIAGSQINHSLYVTDTKSSGDDYQAKYGGAFLDELKEKYPELFTKKQISTGQAIDPSVKIKQWSAKYFNGSNILGRGADYVLSDQASNKYLNVSDDKLFLPKTLLGQVVESGIRFDGTGYVYNSSTTGEKVTDSFITEAGNLYYFGQDGYMVTGAQNIKGSNYYFLANGAALRNTVYTDAQGQNHYYGNDGKRYENGYQQFGNDSWRYFKNGVMALGLTTVDGHVQYFDKDGVQAKDKIIVTRDGKVRYFDQHNGNAVTNTFVADKTGHWYYLGKDGVAVTGAQTVGKQHLYFEANGQQVKGDFVTAKDGKLYFYDVDSGDMWTNTFIEDKAGNWFYLGKDGAAVTGAQTIKGQKLYFKANGQQVKGDIVKDADGKIRYYDAQTGEQVFNKSVSVNGKTYYFGSDGTAQTQANPKGQTFKDGSGVLRFYNLEGQYVSGSGWYETAEHEWVYVKSGKVLTGAQTIGNQRVYFKDNGHQVKGQLVTGNDGKLRYYDANSGDQAFNKSVTVNGKTYYFGSDGTAQTQANPKGQTFKDGSGVLRFYNLEGQYVSGSGWYKNAQGQWLYVKDGKVLTGLQTVGNQKVYFDKNGIQAKGKAVRTSDGKVRYFDENSGSMITNQWKFVYGQYYYFGSDGAAVYRGWN.

Positions 1 to 38 (MEKNERFKMHKVKKRWVTISVASATMLASALGASVASA) are cleaved as a signal peptide. The tract at residues 52–120 (LTADQTTTNQ…QTTTNANEAK (69 aa)) is disordered. The segment covering 53-114 (TADQTTTNQD…STDTAAQTTT (62 aa)) has biased composition (low complexity). Cell wall-binding repeat units follow at residues 157 to 176 (MSNV…DGNV) and 178 to 197 (KNFA…TGAY). The segment at 200–1050 (TSKVEADKSG…DQASNKYLNV (851 aa)) is catalytic; approximate. 22 Cell wall-binding repeats span residues 1089-1108 (TDSF…DGYM), 1109-1128 (VTGA…NGAA), 1130-1150 (RNTV…DGKR), 1152-1172 (ENGY…GVMA), 1173-1191 (LGLT…DGVQ), 1193-1214 (KDKI…NGNA), 1216-1236 (TNTF…DGVA), 1237-1256 (VTGA…NGQQ), 1258-1279 (KGDF…SGDM), 1281-1301 (TNTF…DGAA), 1302-1321 (VTGA…NGQQ), 1323-1343 (KGDI…QTGE), 1344-1365 (QVFN…DGTA), 1366-1380 (QTQA…KDGS), 1415-1434 (LTGA…NGHQ), 1436-1457 (KGQL…SGDQ), 1459-1478 (FNKS…DGTA), 1485-1505 (KGQT…EGQY), 1508-1527 (GSGW…DGKV), 1528-1547 (LTGL…NGIQ), 1549-1570 (KGKA…SGSM), and 1572-1591 (TNQW…DGAA). Residues 1099–1597 (LYYFGQDGYM…DGAAVYRGWN (499 aa)) form a glucan-binding; approximate region.

This sequence belongs to the glycosyl hydrolase 70 family.

The protein localises to the secreted. The catalysed reaction is [(1-&gt;6)-alpha-D-glucosyl](n) + sucrose = [(1-&gt;6)-alpha-D-glucosyl](n+1) + D-fructose. Production of extracellular glucans, that are thought to play a key role in the development of the dental plaque because of their ability to adhere to smooth surfaces and mediate the aggregation of bacterial cells and food debris. The chain is Glucosyltransferase-I (gtfI) from Streptococcus downei (Streptococcus sobrinus).